The following is a 1082-amino-acid chain: CRISPR-associated endonuclease Cas9 (1082 aa).

Asp16 serves as the catalytic For RuvC-like nuclease domain. Residues Asp16, Glu504, and Glu508 each coordinate Mg(2+). The 156-residue stretch at Ser512–Leu667 folds into the HNH Cas9-type domain. His588 serves as the catalytic Proton acceptor for HNH nuclease domain. His723 serves as a coordination point for Mg(2+).

It belongs to the CRISPR-associated protein Cas9 family. Subtype II-C subfamily. Monomer. Binds crRNA and tracrRNA. Requires Mg(2+) as cofactor.

In terms of biological role, CRISPR (clustered regularly interspaced short palindromic repeat) is an adaptive immune system that provides protection against mobile genetic elements (viruses, transposable elements and conjugative plasmids). CRISPR clusters contain spacers, sequences complementary to antecedent mobile elements, and target invading nucleic acids. CRISPR clusters are transcribed and processed into CRISPR RNA (crRNA). In type II CRISPR systems correct processing of pre-crRNA requires a trans-encoded small RNA (tracrRNA), endogenous ribonuclease 3 (rnc) and this protein. The tracrRNA serves as a guide for ribonuclease 3-aided processing of pre-crRNA. Subsequently Cas9/crRNA/tracrRNA endonucleolytically cleaves linear or circular dsDNA target complementary to the spacer; Cas9 is inactive in the absence of the 2 guide RNAs (gRNA). Cas9 recognizes the protospacer adjacent motif (PAM) in the CRISPR repeat sequences to help distinguish self versus nonself, as targets within the bacterial CRISPR locus do not have PAMs. PAM recognition is also required for catalytic activity. Cuts target DNA in Cas9:gRNAs mixing experiments with C.jejuni strain NCTC 11168 and P.multocoda strain Pm70. The polypeptide is CRISPR-associated endonuclease Cas9 (Neisseria meningitidis serogroup A / serotype 4A (strain DSM 15465 / Z2491)).